A 549-amino-acid polypeptide reads, in one-letter code: Cytoplasmic trehalase (549 aa).

Substrate is bound by residues arginine 168, 175–176, asparagine 212, 221–223, 292–294, and glycine 324; these read WD, RSQ, and RDE. Residues aspartate 326 and glutamate 509 each act as proton donor/acceptor in the active site. A substrate-binding site is contributed by glutamate 525.

This sequence belongs to the glycosyl hydrolase 37 family. As to quaternary structure, monomer.

It is found in the cytoplasm. It carries out the reaction alpha,alpha-trehalose + H2O = alpha-D-glucose + beta-D-glucose. It participates in glycan degradation; trehalose degradation; D-glucose from alpha,alpha-trehalose: step 1/1. Hydrolyzes trehalose to glucose. Could be involved, in cells returning to low osmolarity conditions, in the utilization of the accumulated cytoplasmic trehalose, which was synthesized in response to high osmolarity. This chain is Cytoplasmic trehalase, found in Escherichia coli O81 (strain ED1a).